The primary structure comprises 81 residues: X antigen family member 1 (81 aa).

K12 is covalently cross-linked (Glycyl lysine isopeptide (Lys-Gly) (interchain with G-Cter in SUMO2)). At S20 the chain carries Phosphoserine. Glycyl lysine isopeptide (Lys-Gly) (interchain with G-Cter in SUMO2) cross-links involve residues K61 and K65.

Belongs to the GAGE family. As to expression, in normal tissues, highly expressed in testis. Expressed also in many different types of cancers: highly expressed in breast cancer, prostate cancer and many types of lung cancers, including squamous cell carcinoma, small cell carcinoma, non-small cell carcinoma, and adenocarcinoma, as well as in Ewing's cell lines, in some Ewing's sarcoma patient samples, and in one of one alveolar rhabdomyosarcoma patient sample.

The chain is X antigen family member 1 from Homo sapiens (Human).